Reading from the N-terminus, the 464-residue chain is Argininosuccinate lyase (464 aa).

Belongs to the lyase 1 family. Argininosuccinate lyase subfamily.

The protein resides in the cytoplasm. The catalysed reaction is 2-(N(omega)-L-arginino)succinate = fumarate + L-arginine. It participates in amino-acid biosynthesis; L-arginine biosynthesis; L-arginine from L-ornithine and carbamoyl phosphate: step 3/3. The chain is Argininosuccinate lyase from Janthinobacterium sp. (strain Marseille) (Minibacterium massiliensis).